The chain runs to 451 residues: Adenylosuccinate synthetase isozyme 2 (451 aa).

GTP-binding positions include 34–40 and 62–64; these read GDEGKGK and GHT. Catalysis depends on Asp-35, which acts as the Proton acceptor. The Mg(2+) site is built by Asp-35 and Gly-62. Asp-35 contributes to the substrate binding site. Residues 35–38, 60–63, Thr-157, Arg-171, Asn-250, Thr-265, and Arg-329 contribute to the IMP site; these read DEGK and NAGH. His-63 acts as the Proton donor in catalysis. Substrate is bound at residue 325–331; it reads VTTGRKR. Residues Arg-331, 357-359, and 439-442 contribute to the GTP site; these read KLD and GVGK.

It belongs to the adenylosuccinate synthetase family. As to quaternary structure, homodimer. Requires Mg(2+) as cofactor.

The protein localises to the cytoplasm. Its subcellular location is the mitochondrion. It carries out the reaction IMP + L-aspartate + GTP = N(6)-(1,2-dicarboxyethyl)-AMP + GDP + phosphate + 2 H(+). Its pathway is purine metabolism; AMP biosynthesis via de novo pathway; AMP from IMP: step 1/2. Inhibited competitively by AMP and IMP and non-competitively by fructose 1,6-bisphosphate. Functionally, plays an important role in the de novo pathway and in the salvage pathway of purine nucleotide biosynthesis. Catalyzes the first committed step in the biosynthesis of AMP from IMP. The chain is Adenylosuccinate synthetase isozyme 2 from Gallus gallus (Chicken).